Consider the following 319-residue polypeptide: Cytochrome c biogenesis protein CcsA (319 aa).

8 consecutive transmembrane segments (helical) span residues 11–31 (VNFA…SLAF), 34–54 (ISGL…ALAL), 71–91 (LYES…FIES), 97–117 (LIGA…SLAL), 142–162 (IMMI…LFLI), 227–247 (IIGL…VWAN), 254–274 (WSWD…AAYL), and 288–308 (AILA…VNFL).

Belongs to the CcmF/CycK/Ccl1/NrfE/CcsA family. May interact with Ccs1.

The protein resides in the plastid. It is found in the chloroplast thylakoid membrane. In terms of biological role, required during biogenesis of c-type cytochromes (cytochrome c6 and cytochrome f) at the step of heme attachment. In Porphyra purpurea (Red seaweed), this protein is Cytochrome c biogenesis protein CcsA.